Here is a 1331-residue protein sequence, read N- to C-terminus: Serine/threonine-protein kinase SSK22 (1331 aa).

In terms of domain architecture, Protein kinase spans 1034–1310 (WQKRSFIGGG…AVELLIDPWM (277 aa)). ATP contacts are provided by residues 1040–1048 (IGGGTFGQV) and Lys-1063. Residue Asp-1158 is the Proton acceptor of the active site.

The protein belongs to the protein kinase superfamily. STE Ser/Thr protein kinase family. MAP kinase kinase kinase subfamily. In terms of assembly, interacts with by SSK1.

The catalysed reaction is L-seryl-[protein] + ATP = O-phospho-L-seryl-[protein] + ADP + H(+). It carries out the reaction L-threonyl-[protein] + ATP = O-phospho-L-threonyl-[protein] + ADP + H(+). Functionally, kinase involved in a signal transduction pathway that is activated by changes in the osmolarity of the extracellular environment. Activates the PBS2 MAP kinase kinase by phosphorylation. This chain is Serine/threonine-protein kinase SSK22 (SSK22), found in Saccharomyces cerevisiae (strain ATCC 204508 / S288c) (Baker's yeast).